The following is a 180-amino-acid chain: Large ribosomal subunit protein uL18m (180 aa).

It belongs to the universal ribosomal protein uL18 family. As to quaternary structure, component of the mitochondrial large ribosomal subunit (mt-LSU). Mature mammalian 55S mitochondrial ribosomes consist of a small (28S) and a large (39S) subunit. The 28S small subunit contains a 12S ribosomal RNA (12S mt-rRNA) and 30 different proteins. The 39S large subunit contains a 16S rRNA (16S mt-rRNA), a copy of mitochondrial valine transfer RNA (mt-tRNA(Val)), which plays an integral structural role, and 52 different proteins.

Its subcellular location is the mitochondrion. Functionally, together with thiosulfate sulfurtransferase (TST), acts as a mitochondrial import factor for the cytosolic 5S rRNA. The precursor form shows RNA chaperone activity; is able to fold the 5S rRNA into an import-competent conformation that is recognized by rhodanese (TST). Both the cytoplasmic and mitochondrial forms are able to bind to the helix IV-loop D in the gamma domain of the 5S rRNA. The polypeptide is Large ribosomal subunit protein uL18m (MRPL18) (Homo sapiens (Human)).